Consider the following 295-residue polypeptide: Hepatic leukemia factor (295 aa).

Positions 37 to 52 (EDAFSKDKDKEKKLDD) are enriched in basic and acidic residues. Disordered regions lie at residues 37–70 (EDAF…PTLW) and 93–167 (SENG…IDPD). One can recognise a bZIP domain in the interval 225 to 288 (DDKYWARRRK…GKCKNILAKY (64 aa)). The interval 227–247 (KYWARRRKNNMAAKRSRDARR) is basic motif. The interval 248 to 255 (LKENQIAI) is leucine-zipper.

Belongs to the bZIP family. PAR subfamily. As to quaternary structure, binds DNA specifically as homodimer or heterodimer with other PAR factors. In terms of tissue distribution, highly expressed in liver; lower levels in lung and kidney.

The protein localises to the nucleus. The sequence is that of Hepatic leukemia factor (HLF) from Homo sapiens (Human).